The chain runs to 860 residues: Alanine--tRNA ligase (860 aa).

Zn(2+)-binding residues include H563, H567, C665, and H669.

This sequence belongs to the class-II aminoacyl-tRNA synthetase family. It depends on Zn(2+) as a cofactor.

It localises to the cytoplasm. It carries out the reaction tRNA(Ala) + L-alanine + ATP = L-alanyl-tRNA(Ala) + AMP + diphosphate. In terms of biological role, catalyzes the attachment of alanine to tRNA(Ala) in a two-step reaction: alanine is first activated by ATP to form Ala-AMP and then transferred to the acceptor end of tRNA(Ala). Also edits incorrectly charged Ser-tRNA(Ala) and Gly-tRNA(Ala) via its editing domain. This Vibrio cholerae serotype O1 (strain ATCC 39315 / El Tor Inaba N16961) protein is Alanine--tRNA ligase.